A 165-amino-acid chain; its full sequence is Transcription elongation factor A protein-like 1 (165 aa).

The tract at residues 1–101 is disordered; sequence MENTRSENEE…EQPPCGVGKH (101 aa). Over residues 33–60 the composition is skewed to acidic residues; sequence CSEEDQSSEDLSSEEQSSEEEFFPEELL.

It belongs to the TFS-II family. TFA subfamily.

It is found in the nucleus. Functionally, may be involved in transcriptional regulation. Modulates various viral and cellular promoters in a promoter context-dependent manner. Does not bind DNA directly. The chain is Transcription elongation factor A protein-like 1 from Mus musculus (Mouse).